A 457-amino-acid polypeptide reads, in one-letter code: Exodeoxyribonuclease 7 large subunit (457 aa).

This sequence belongs to the XseA family. Heterooligomer composed of large and small subunits.

The protein resides in the cytoplasm. It carries out the reaction Exonucleolytic cleavage in either 5'- to 3'- or 3'- to 5'-direction to yield nucleoside 5'-phosphates.. Its function is as follows. Bidirectionally degrades single-stranded DNA into large acid-insoluble oligonucleotides, which are then degraded further into small acid-soluble oligonucleotides. This is Exodeoxyribonuclease 7 large subunit from Cronobacter sakazakii (strain ATCC BAA-894) (Enterobacter sakazakii).